The sequence spans 340 residues: Nicotinate-nucleotide--dimethylbenzimidazole phosphoribosyltransferase (340 aa).

E305 (proton acceptor) is an active-site residue.

The protein belongs to the CobT family.

The enzyme catalyses 5,6-dimethylbenzimidazole + nicotinate beta-D-ribonucleotide = alpha-ribazole 5'-phosphate + nicotinate + H(+). It participates in nucleoside biosynthesis; alpha-ribazole biosynthesis; alpha-ribazole from 5,6-dimethylbenzimidazole: step 1/2. In terms of biological role, catalyzes the synthesis of alpha-ribazole-5'-phosphate from nicotinate mononucleotide (NAMN) and 5,6-dimethylbenzimidazole (DMB). This is Nicotinate-nucleotide--dimethylbenzimidazole phosphoribosyltransferase from Allorhizobium ampelinum (strain ATCC BAA-846 / DSM 112012 / S4) (Agrobacterium vitis (strain S4)).